A 1705-amino-acid polypeptide reads, in one-letter code: ALK tyrosine kinase receptor (1705 aa).

The signal sequence occupies residues 1–21 (MIARILYFFLWSAAFLPELQC). The Extracellular segment spans residues 22-1035 (ASQRTADALT…SLSHLALGLS (1014 aa)). Asparagine 40 and asparagine 48 each carry an N-linked (GlcNAc...) asparagine glycan. Positions 54–76 (RIKRKTLSVDFAVPSLLRYYLAL) are heparin-binding region. N-linked (GlcNAc...) asparagine glycans are attached at residues asparagine 124, asparagine 259, asparagine 334, asparagine 434, asparagine 442, asparagine 458, asparagine 484, asparagine 578, asparagine 590, and asparagine 635. Residues 486–644 (SYCSFGREDC…NFTLSMECFL (159 aa)) enclose the MAM domain. Cysteine 694 and cysteine 707 are oxidised to a cystine. A glycan (N-linked (GlcNAc...) asparagine) is linked at asparagine 717. A disulfide bond links cysteine 788 and cysteine 799. Residues asparagine 808 and asparagine 881 are each glycosylated (N-linked (GlcNAc...) asparagine). Residues 842-892 (GGGRGYSSQSETPEEVMDRDPSIPGRNGKSGTAGGGGGWNDSAPVPQGGRP) form a disordered region. A disulfide bridge links cysteine 903 with cysteine 921. A glycan (N-linked (GlcNAc...) asparagine) is linked at asparagine 979. 2 disulfide bridges follow: cysteine 980–cysteine 988 and cysteine 983–cysteine 997. Residues 980 to 1016 (CSHCESGDCHETSEGMVCYCDEELTLAPDGVSCINST) are EGF-like. Residue asparagine 1014 is glycosylated (N-linked (GlcNAc...) asparagine). Residues 1036–1056 (VGTSALIAALLLAVSGVMIMY) form a helical membrane-spanning segment. Residues 1057–1705 (RRKHTELQSI…KMEGHNATVL (649 aa)) lie on the Cytoplasmic side of the membrane. A Protein kinase domain is found at 1113–1389 (ISLTRGLGHG…IDYCLQDPDV (277 aa)). ATP-binding positions include 1119-1127 (LGHGAFGEV) and lysine 1147. Catalysis depends on aspartate 1246, which acts as the Proton acceptor. Disordered stretches follow at residues 1395 to 1499 (PVEY…GHVN), 1505 to 1524 (AHSSEKESRNRKPTNLWNPT), 1532 to 1557 (QQQKRQQVQAQRQTSGPRIPGEGQEQ), 1588 to 1613 (QQQQQQQQQQGLCRPLLPPPPPPAPT), and 1646 to 1681 (GLPMEPMQGPQLPPPHPGQQRPISLTRASGPEDSRP). A compositionally biased stretch (polar residues) spans 1484-1493 (KPSSTTSNAQ). 2 stretches are compositionally biased toward low complexity: residues 1532–1544 (QQQKRQQVQAQRQ) and 1588–1602 (QQQQQQQQQQGLCRP). Residues 1603–1613 (LLPPPPPPAPT) show a composition bias toward pro residues.

This sequence belongs to the protein kinase superfamily. Tyr protein kinase family. Insulin receptor subfamily. As to quaternary structure, homodimer; homodimerizes upon binding to alkal ligands (alkal1, alkal2a or alkal2b). As to expression, highly expressed in the developing central nervous system: highly expressed in brain, with much lower expression in heart, caudal fin and testis.

The protein resides in the cell membrane. It catalyses the reaction L-tyrosyl-[protein] + ATP = O-phospho-L-tyrosyl-[protein] + ADP + H(+). With respect to regulation, inhibited by ALK inhibitor TAE684. Functionally, receptor tyrosine kinase required for neurogenesis in the developing central nervous system. Following activation by alkal ligands (alkal1, alkal2a or alkal2b) at the cell surface, transduces an extracellular signal into an intracellular response. Ligand-binding to the extracellular domain induces tyrosine kinase activation, resulting in the activation of the mitogen-activated protein kinase (MAPK) pathway. Phosphorylates almost exclusively at the first tyrosine of the Y-x-x-x-Y-Y motif. This Danio rerio (Zebrafish) protein is ALK tyrosine kinase receptor.